A 673-amino-acid polypeptide reads, in one-letter code: MDSTQVSFKSIFGGTPEPTDEVDAEPDPTQHGPHSFNNVTTTSAKLADENVAPFLAKHIPEQYAPLGSRTGKPEDLSSANSKYCYRHRPDLKCRRQADEPSMDKLQRDLETLPQSDQQGIAHIWSLFSAAPAKHRKLILQGLMAQCCFPQLSFVSATVRDLIRIDFLTALPPEISFKILCYLDTTSLCKAAQVSRRWRALADDDVVWHRMCEQHIHRKCKKCGWGLPLLERKRLRESKREIELRATTWDISGPSPTVTSTGEQQREQSAAPESSSSGKRKQDTSDEETAVVKRQCSSLAPDSENDDAFFKKRYRPWKEVYKDRFKVGTNWKYGRCSTKIFKGHTNGVMCLQFEDNILATGSYDATIKIWDTETGEELRTLYGHESGIRCLQFDDTKLISGSMDRSLKVWNWRTGECISTYTGHRGGVIGLHFDATILASASVDKTVKIWNFEDKSTCLLRGHTDWVNAVRVDTTSRTVFSASDDCTVRLWDLDTKQCIRTFHGHVGQVQQVIPLPREFEFEEHDAECENDNVSTVSDDPGSPAPQTTFGVSSIEPASQSSMFGPSFDNGRPAPPRYIVTSALDSTIRLWETTTGRCLRTFFGHLEGVWALGADTLRIVSGAEDRMVKIWDPRTGKCERTFTGHSGPVTCIGLGDSRFATGSEDCEVRMYSFQS.

Positions 1–37 are disordered; the sequence is MDSTQVSFKSIFGGTPEPTDEVDAEPDPTQHGPHSFN. Residues 164–210 form the F-box domain; the sequence is IDFLTALPPEISFKILCYLDTTSLCKAAQVSRRWRALADDDVVWHRM. A disordered region spans residues 249-302; it reads DISGPSPTVTSTGEQQREQSAAPESSSSGKRKQDTSDEETAVVKRQCSSLAPDS. A compositionally biased stretch (polar residues) spans 253 to 276; the sequence is PSPTVTSTGEQQREQSAAPESSSS. 7 WD repeats span residues 342–379, 382–421, 423–459, 461–502, 556–599, 602–639, and 642–673; these read GHTN…ELRT, GHES…STYT, HRGG…TCLL, GHTD…RTFH, ASQS…CLRT, GHLE…CERT, and GHSG…SFQS.

It belongs to the WD repeat MET30/SCONB/SCON-2 family. Component of the SCF(sconB) E3 ubiquitin ligase complex.

Its pathway is protein modification; protein ubiquitination. Its function is as follows. Component of the SCF(sconB) E3 ubiquitin ligase complex involved in the regulation of sulfur metabolite repression, probably by mediating the inactivation or degradation of the metR transcription factor. This chain is Probable E3 ubiquitin ligase complex SCF subunit sconB (sconB), found in Aspergillus terreus (strain NIH 2624 / FGSC A1156).